A 657-amino-acid chain; its full sequence is Methylenetetrahydrofolate reductase 1 (657 aa).

The active-site Proton donor/acceptor is Glu18. NAD(+)-binding positions include 18–23 (EFFPPK) and 49–50 (TW). FAD is bound by residues 49 to 50 (TW), His78, and 108 to 110 (RGD). Residue Asp110 participates in substrate binding. Residue Ser120 is modified to Phosphoserine. FAD contacts are provided by residues 129-130 (YA), Tyr152, Asp171, and Lys178. The substrate site is built by Gln189 and Tyr286. Residue Ser301 is modified to Phosphoserine. A disordered region spans residues 308 to 329 (VNESSEEEGEDETSGEIGSIEN). Residues 311–321 (SSEEEGEDETS) are compositionally biased toward acidic residues. The residue at position 358 (Ser358) is a Phosphoserine.

The protein belongs to the methylenetetrahydrofolate reductase family. FAD serves as cofactor.

The catalysed reaction is (6S)-5-methyl-5,6,7,8-tetrahydrofolate + NADP(+) = (6R)-5,10-methylene-5,6,7,8-tetrahydrofolate + NADPH + H(+). It carries out the reaction (6S)-5-methyl-5,6,7,8-tetrahydrofolate + NAD(+) = (6R)-5,10-methylene-5,6,7,8-tetrahydrofolate + NADH + H(+). It participates in one-carbon metabolism; tetrahydrofolate interconversion. In Saccharomyces cerevisiae (strain ATCC 204508 / S288c) (Baker's yeast), this protein is Methylenetetrahydrofolate reductase 1 (MET12).